A 472-amino-acid polypeptide reads, in one-letter code: 3-isopropylmalate dehydratase large subunit (472 aa).

3 residues coordinate [4Fe-4S] cluster: Cys-352, Cys-413, and Cys-416.

The protein belongs to the aconitase/IPM isomerase family. LeuC type 1 subfamily. Heterodimer of LeuC and LeuD. Requires [4Fe-4S] cluster as cofactor.

It carries out the reaction (2R,3S)-3-isopropylmalate = (2S)-2-isopropylmalate. Its pathway is amino-acid biosynthesis; L-leucine biosynthesis; L-leucine from 3-methyl-2-oxobutanoate: step 2/4. Catalyzes the isomerization between 2-isopropylmalate and 3-isopropylmalate, via the formation of 2-isopropylmaleate. The protein is 3-isopropylmalate dehydratase large subunit of Laribacter hongkongensis (strain HLHK9).